We begin with the raw amino-acid sequence, 204 residues long: MASVSSATFSGHGARSLLQFLRLVGQLKRVPRTGWVYRNVQRPESVSDHMYRMAVMAMVIKDDRLNKDRCVRLALVHDMAECIVGDIAPADNIPKEEKHRREEEAMKQITQLLPEDLRKELYELWEEYETQSSAEAKFVKQLDQCEMILQASEYEDLEHKPGRLQDFYDSTAGKFNHPEIVQLVSELEAERSTNIAAAASEPHS.

Residue Ala-2 is modified to N-acetylalanine. Phosphoserine occurs at positions 3 and 5. The HD domain occupies 46–148 (VSDHMYRMAV…VKQLDQCEMI (103 aa)). Positions 49, 77, 78, 81, 86, 87, and 143 each coordinate a divalent metal cation. Ser-204 carries the post-translational modification Phosphoserine.

The protein belongs to the HDDC2 family. As to quaternary structure, homodimer. The cofactor is Mn(2+). Co(2+) serves as cofactor. It depends on Mg(2+) as a cofactor.

The catalysed reaction is a 2'-deoxyribonucleoside 5'-phosphate + H2O = a 2'-deoxyribonucleoside + phosphate. In terms of biological role, catalyzes the dephosphorylation of the nucleoside 5'-monophosphates deoxyadenosine monophosphate (dAMP), deoxycytidine monophosphate (dCMP), deoxyguanosine monophosphate (dGMP) and deoxythymidine monophosphate (dTMP). In Homo sapiens (Human), this protein is 5'-deoxynucleotidase HDDC2 (HDDC2).